Here is a 75-residue protein sequence, read N- to C-terminus: Protein SlyX homolog (75 aa).

This sequence belongs to the SlyX family.

In Chromobacterium violaceum (strain ATCC 12472 / DSM 30191 / JCM 1249 / CCUG 213 / NBRC 12614 / NCIMB 9131 / NCTC 9757 / MK), this protein is Protein SlyX homolog.